Consider the following 426-residue polypeptide: Probable glucose-6-phosphate isomerase (426 aa).

E272 functions as the Proton donor in the catalytic mechanism. Catalysis depends on residues H293 and K404.

The protein belongs to the GPI family.

It localises to the cytoplasm. The enzyme catalyses alpha-D-glucose 6-phosphate = beta-D-fructose 6-phosphate. It functions in the pathway carbohydrate biosynthesis; gluconeogenesis. It participates in carbohydrate degradation; glycolysis; D-glyceraldehyde 3-phosphate and glycerone phosphate from D-glucose: step 2/4. Functionally, catalyzes the reversible isomerization of glucose-6-phosphate to fructose-6-phosphate. This chain is Probable glucose-6-phosphate isomerase, found in Halobacterium salinarum (strain ATCC 700922 / JCM 11081 / NRC-1) (Halobacterium halobium).